A 119-amino-acid polypeptide reads, in one-letter code: Holo-[acyl-carrier-protein] synthase (119 aa).

Residues aspartate 8 and glutamate 58 each coordinate Mg(2+).

The protein belongs to the P-Pant transferase superfamily. AcpS family. Requires Mg(2+) as cofactor.

The protein localises to the cytoplasm. It carries out the reaction apo-[ACP] + CoA = holo-[ACP] + adenosine 3',5'-bisphosphate + H(+). Transfers the 4'-phosphopantetheine moiety from coenzyme A to a Ser of acyl-carrier-protein. The polypeptide is Holo-[acyl-carrier-protein] synthase (Limosilactobacillus fermentum (strain NBRC 3956 / LMG 18251) (Lactobacillus fermentum)).